Consider the following 175-residue polypeptide: ATP synthase subunit delta (175 aa).

It belongs to the ATPase delta chain family. As to quaternary structure, F-type ATPases have 2 components, F(1) - the catalytic core - and F(0) - the membrane proton channel. F(1) has five subunits: alpha(3), beta(3), gamma(1), delta(1), epsilon(1). F(0) has three main subunits: a(1), b(2) and c(10-14). The alpha and beta chains form an alternating ring which encloses part of the gamma chain. F(1) is attached to F(0) by a central stalk formed by the gamma and epsilon chains, while a peripheral stalk is formed by the delta and b chains.

It is found in the cell inner membrane. F(1)F(0) ATP synthase produces ATP from ADP in the presence of a proton or sodium gradient. F-type ATPases consist of two structural domains, F(1) containing the extramembraneous catalytic core and F(0) containing the membrane proton channel, linked together by a central stalk and a peripheral stalk. During catalysis, ATP synthesis in the catalytic domain of F(1) is coupled via a rotary mechanism of the central stalk subunits to proton translocation. In terms of biological role, this protein is part of the stalk that links CF(0) to CF(1). It either transmits conformational changes from CF(0) to CF(1) or is implicated in proton conduction. The sequence is that of ATP synthase subunit delta from Xanthomonas axonopodis pv. citri (strain 306).